The chain runs to 190 residues: Putative manganese efflux pump MntP (190 aa).

6 consecutive transmembrane segments (helical) span residues 3 to 23, 39 to 59, 65 to 85, 106 to 128, 133 to 155, and 157 to 177; these read PASI…AAVG, IGLI…FIGQ, VANW…LHMI, WLLA…GLAF, IWVA…VMLG, and AIGT…LIIV.

It belongs to the MntP (TC 9.B.29) family.

It localises to the cell inner membrane. Its function is as follows. Probably functions as a manganese efflux pump. This Pseudomonas fluorescens (strain ATCC BAA-477 / NRRL B-23932 / Pf-5) protein is Putative manganese efflux pump MntP.